Consider the following 179-residue polypeptide: Inosine/xanthosine triphosphatase (179 aa).

Glu71 serves as a coordination point for Mg(2+). 71 to 72 (EA) contributes to the substrate binding site.

It belongs to the YjjX NTPase family. In terms of assembly, homodimer. It depends on Mg(2+) as a cofactor. Mn(2+) is required as a cofactor.

The enzyme catalyses XTP + H2O = XDP + phosphate + H(+). The catalysed reaction is ITP + H2O = IDP + phosphate + H(+). Phosphatase that hydrolyzes non-canonical purine nucleotides such as XTP and ITP to their respective diphosphate derivatives. Probably excludes non-canonical purines from DNA/RNA precursor pool, thus preventing their incorporation into DNA/RNA and avoiding chromosomal lesions. The polypeptide is Inosine/xanthosine triphosphatase (Shewanella sp. (strain ANA-3)).